We begin with the raw amino-acid sequence, 234 residues long: Adenylate dimethylallyltransferase (234 aa).

Belongs to the isopentenyl transferase family.

The enzyme catalyses dimethylallyl diphosphate + AMP = N(6)-(dimethylallyl)adenosine 5'-phosphate + diphosphate. In terms of biological role, transfers dimethylallyl groups to AMP as part of the biosynthesis of cytokinin phytohormones. The chain is Adenylate dimethylallyltransferase (ptz) from Pseudomonas savastanoi (Pseudomonas syringae pv. savastanoi).